The chain runs to 391 residues: Dual-specificity RNA methyltransferase RlmN (391 aa).

Glu115 acts as the Proton acceptor in catalysis. Positions 121 to 363 (EENRGTLCIS…SPIRTPRGED (243 aa)) constitute a Radical SAM core domain. The cysteines at positions 128 and 368 are disulfide-linked. Cys135, Cys139, and Cys142 together coordinate [4Fe-4S] cluster. Residues 194 to 195 (GE), Ser226, 248 to 250 (SFH), and Asn325 contribute to the S-adenosyl-L-methionine site. Residue Cys368 is the S-methylcysteine intermediate of the active site.

The protein belongs to the radical SAM superfamily. RlmN family. [4Fe-4S] cluster is required as a cofactor.

It is found in the cytoplasm. The enzyme catalyses adenosine(2503) in 23S rRNA + 2 reduced [2Fe-2S]-[ferredoxin] + 2 S-adenosyl-L-methionine = 2-methyladenosine(2503) in 23S rRNA + 5'-deoxyadenosine + L-methionine + 2 oxidized [2Fe-2S]-[ferredoxin] + S-adenosyl-L-homocysteine. The catalysed reaction is adenosine(37) in tRNA + 2 reduced [2Fe-2S]-[ferredoxin] + 2 S-adenosyl-L-methionine = 2-methyladenosine(37) in tRNA + 5'-deoxyadenosine + L-methionine + 2 oxidized [2Fe-2S]-[ferredoxin] + S-adenosyl-L-homocysteine. Functionally, specifically methylates position 2 of adenine 2503 in 23S rRNA and position 2 of adenine 37 in tRNAs. m2A2503 modification seems to play a crucial role in the proofreading step occurring at the peptidyl transferase center and thus would serve to optimize ribosomal fidelity. This chain is Dual-specificity RNA methyltransferase RlmN, found in Paracoccus denitrificans (strain Pd 1222).